Here is a 353-residue protein sequence, read N- to C-terminus: L-tryptophan dehydrogenase (353 aa).

Arginine 44 provides a ligand contact to NAD(+). Residue lysine 80 is the Proton donor/acceptor of the active site. Residues aspartate 114, threonine 146, 176 to 181 (GLGNVG), lysine 204, and 255 to 257 (AAN) each bind NAD(+).

This sequence belongs to the Glu/Leu/Phe/Val dehydrogenases family. Homodimer.

The enzyme catalyses L-tryptophan + NAD(+) + H2O = indole-3-pyruvate + NH4(+) + NADH + H(+). With respect to regulation, highly susceptible to inhibition by indole-3-pyruvate. Activity is not affected by the presence of metal ions, EDTA, KCl or DMSO. In terms of biological role, catalyzes the reversible oxidative deamination of L-tryptophan to indole-3-pyruvate in the presence of NAD(+). Shows weak activity with L-phenylalanine, but cannot use other L-amino acids and D-Trp. Cannot use NADP(+) for oxidative deamination of L-Trp, and shows only weak activity with NADPH for reductive amination of indole-3-pyruvate. Involved in the biosynthesis of scytonemin, a cyanobacterial radiation-absorbing pigment. This is L-tryptophan dehydrogenase from Nostoc punctiforme.